The chain runs to 425 residues: Adenylosuccinate synthetase (425 aa).

Residues 12–18 (GDEGKGK) and 40–42 (GHT) each bind GTP. Catalysis depends on Asp-13, which acts as the Proton acceptor. 2 residues coordinate Mg(2+): Asp-13 and Gly-40. IMP contacts are provided by residues 13-16 (DEGK), 38-41 (NAGH), Thr-130, Arg-144, Gln-224, Thr-239, and Arg-301. Catalysis depends on His-41, which acts as the Proton donor. 297 to 303 (TVSNRRR) provides a ligand contact to substrate. Residues Arg-303, 329–331 (KLD), and 411–413 (STS) each bind GTP.

This sequence belongs to the adenylosuccinate synthetase family. In terms of assembly, homodimer. Mg(2+) is required as a cofactor.

The protein resides in the cytoplasm. It carries out the reaction IMP + L-aspartate + GTP = N(6)-(1,2-dicarboxyethyl)-AMP + GDP + phosphate + 2 H(+). Its pathway is purine metabolism; AMP biosynthesis via de novo pathway; AMP from IMP: step 1/2. Functionally, plays an important role in the de novo pathway of purine nucleotide biosynthesis. Catalyzes the first committed step in the biosynthesis of AMP from IMP. The protein is Adenylosuccinate synthetase of Wolbachia pipientis subsp. Culex pipiens (strain wPip).